A 65-amino-acid polypeptide reads, in one-letter code: Conotoxin Am6.4 (65 aa).

A disordered region spans residues 1 to 33; the sequence is STGKRNAGKLTVTDDVEADRDTDPDDKDPSVHN. The propeptide occupies 1 to 36; it reads STGKRNAGKLTVTDDVEADRDTDPDDKDPSVHNSWR. The span at 14–26 shows a compositional bias: acidic residues; sequence DDVEADRDTDPDD. Disulfide bonds link Cys40/Cys50, Cys45/Cys59, and Cys49/Cys64.

Post-translationally, is not hydroxylated. Expressed by the venom duct.

It localises to the secreted. Its function is as follows. Probable toxin that inhibits ion channels. The sequence is that of Conotoxin Am6.4 from Conus amadis (Amadis cone).